Reading from the N-terminus, the 141-residue chain is uncharacterized protein (141 aa).

The protein belongs to the mimivirus L163/R849 family.

This is an uncharacterized protein from Acanthamoeba polyphaga mimivirus (APMV).